Reading from the N-terminus, the 20-residue chain is Apidaecin 3+ (20 aa).

The interval 1 to 20 (GKPSRPRPAPIQPRPPHPRL) is disordered.

The protein belongs to the apidaecin family.

The protein resides in the secreted. In terms of biological role, antimicrobial peptide active against many Gram-negative enterobacterial and plant-associated bacterial species. Not active against other bacterial species like H.pylori, P.mirabilis, B.pertussis or N.gonorrhoeae. Among others, also active against S.typhi. Functionally, not active against S.typhi. This is Apidaecin 3+ from Pimpla disparis (Parasitic wasp).